The sequence spans 249 residues: Exosome complex component Rrp41 (249 aa).

Belongs to the RNase PH family. Rrp41 subfamily. As to quaternary structure, component of the archaeal exosome complex. Forms a hexameric ring-like arrangement composed of 3 Rrp41-Rrp42 heterodimers. The hexameric ring associates with a trimer of Rrp4 and/or Csl4 subunits.

It localises to the cytoplasm. Its function is as follows. Catalytic component of the exosome, which is a complex involved in RNA degradation. Has 3'-&gt;5' exoribonuclease activity. Can also synthesize heteromeric RNA-tails. This is Exosome complex component Rrp41 from Pyrococcus horikoshii (strain ATCC 700860 / DSM 12428 / JCM 9974 / NBRC 100139 / OT-3).